The primary structure comprises 572 residues: Sulfite reductase [NADPH] hemoprotein beta-component (572 aa).

The [4Fe-4S] cluster site is built by cysteine 436, cysteine 442, cysteine 481, and cysteine 485. Cysteine 485 contributes to the siroheme binding site.

The protein belongs to the nitrite and sulfite reductase 4Fe-4S domain family. Alpha(8)-beta(8). The alpha component is a flavoprotein, the beta component is a hemoprotein. It depends on siroheme as a cofactor. [4Fe-4S] cluster is required as a cofactor.

The catalysed reaction is hydrogen sulfide + 3 NADP(+) + 3 H2O = sulfite + 3 NADPH + 4 H(+). It functions in the pathway sulfur metabolism; hydrogen sulfide biosynthesis; hydrogen sulfide from sulfite (NADPH route): step 1/1. Component of the sulfite reductase complex that catalyzes the 6-electron reduction of sulfite to sulfide. This is one of several activities required for the biosynthesis of L-cysteine from sulfate. The polypeptide is Sulfite reductase [NADPH] hemoprotein beta-component (Bacillus pumilus (strain SAFR-032)).